The primary structure comprises 266 residues: HLA class II histocompatibility antigen, DR beta 3 chain (266 aa).

A signal peptide spans 1–29 (MVCLKLPGGSSLAALTVTLMVLSSRLAFA). The tract at residues 30 to 124 (GDTRPRFLEL…GESFTVQRRV (95 aa)) is beta-1. The Extracellular portion of the chain corresponds to 30 to 227 (GDTRPRFLEL…RARSESAQSK (198 aa)). Cystine bridges form between cysteine 44/cysteine 108 and cysteine 146/cysteine 202. The N-linked (GlcNAc...) asparagine glycan is linked to asparagine 48. Residues 125-227 (HPQVTVYPAK…RARSESAQSK (103 aa)) are beta-2. In terms of domain architecture, Ig-like C1-type spans 126–214 (PQVTVYPAKT…EHPSVTSALT (89 aa)). The helical transmembrane segment at 228 to 248 (MLSGVGGFVLGLLFLGAGLFI) threads the bilayer. Residues 249 to 266 (YFRNQKGHSGLQPTGFLS) are Cytoplasmic-facing.

Belongs to the MHC class II family. Heterotrimer that consists of an alpha chain HLA-DRA, a beta chain HLA-DRB1 and a peptide (peptide-MHCII). Newly synthesized alpha and beta chains forms a heterodimer (MHCII) that associates with the CD74/invariant chain (Ii) in the endoplasmic reticulum (ER). Ii is a trimer composed of three subunits and each subunit interacts with one MHCII dimer, blocking the peptide-binding cleft. As a result, MHCII molecules cannot bind peptides present in the ER. The complex of MHCII and CD74/Ii is transported in vesicles from ER to Golgi to lysosomes, where it encounters antigenic peptides generated via proteolysis of endocytosed antigens. MHCII dimers are dissociated from CD74/Ii by the combined action of proteolysis and HLA-DM. Lysosomal enzymes such as cathepsin, degrade CD74/Ii leaving a 24 amino acid remnant called class II-associated Ii or CLIP. Interacts (via the peptide binding cleft) with CLIP; this interaction inhibits antigen peptide binding before entry in the endosomal compartment. The displacement of CLIP and replacement by a high affinity peptide in lysosomes is performed by HLA-DM heterodimer. HLA-DM catalyzes CLIP dissociation from MHCII, stabilizes empty MHCII and mediates the selection of high affinity peptides. Interacts with HLA-DM heterodimer; this interaction is direct. Interacts with TCR (via CDR3). Interacts (via beta-2 domain) with CD4 coreceptor (via Ig-like V-type domain); this interaction is of exceptionally low affinity yet necessary for optimal recognition of antigenic peptides. Post-translationally, ubiquitinated by MARCHF1 and MARCHF8 at Lys-254 leading to sorting into the endosome system and down-regulation of MHC class II. In terms of tissue distribution, expressed in professional APCs: monocyte/macrophages, dendritic cells and B cells (at protein level).

It is found in the cell membrane. Its subcellular location is the endoplasmic reticulum membrane. The protein localises to the lysosome membrane. It localises to the late endosome membrane. The protein resides in the autolysosome membrane. Functionally, a beta chain of antigen-presenting major histocompatibility complex class II (MHCII) molecule. In complex with the alpha chain HLA-DRA, displays antigenic peptides on professional antigen presenting cells (APCs) for recognition by alpha-beta T cell receptor (TCR) on HLA-DRB3-restricted CD4-positive T cells. This guides antigen-specific T-helper effector functions, both antibody-mediated immune response and macrophage activation, to ultimately eliminate the infectious agents and transformed cells. Typically presents extracellular peptide antigens of 10 to 30 amino acids that arise from proteolysis of endocytosed antigens in lysosomes. In the tumor microenvironment, presents antigenic peptides that are primarily generated in tumor-resident APCs likely via phagocytosis of apoptotic tumor cells or macropinocytosis of secreted tumor proteins. Presents peptides derived from intracellular proteins that are trapped in autolysosomes after macroautophagy, a mechanism especially relevant for T cell selection in the thymus and central immune tolerance. The selection of the immunodominant epitopes follows two processing modes: 'bind first, cut/trim later' for pathogen-derived antigenic peptides and 'cut first, bind later' for autoantigens/self-peptides. The anchor residue at position 1 of the peptide N-terminus, usually a large hydrophobic residue, is essential for high affinity interaction with MHCII molecules. Its function is as follows. ALLELE DRB3*01:01: Exclusively presents several immunogenic epitopes derived from C.tetani neurotoxin tetX, playing a significant role in immune recognition and long-term protection. Presents viral epitopes derived from HHV-6B U11, TRX2/U56 and U85 antigens to polyfunctional CD4-positive T cells with cytotoxic activity implicated in control of HHV-6B infection. ALLELE DRB3*02:02 Exclusively presents several immunogenic epitopes derived from C.tetani neurotoxin tetX, playing a significant role in immune recognition and long-term protection. Upon EBV infection, presents to CD4-positive T cells latent antigen EBNA2 (PRSPTVFYNIPPMPLPPSQL) and lytic antigen BZLF1 (LTAYHVSTAPTGSWF) peptides, driving oligoclonal expansion and selection of virus-specific memory T cell subsets with cytotoxic potential to directly eliminate virus-infected B cells. Presents viral epitopes derived from HHV-6B U11, gB/U39 and gH/U48 antigens to polyfunctional CD4-positive T cells with cytotoxic activity implicated in control of HHV-6B infection. Plays a minor role in CD4-positive T cell immune response against Dengue virus by presenting conserved peptides from capsid and non-structural NS3 proteins. Displays peptides derived from IAV matrix protein M, implying a role in protection against IAV infection. In the context of tumor immunesurveillance, may present to T-helper 1 cells an immunogenic epitope derived from tumor-associated antigen WT1 (KRYFKLSHLQMHSRKH), likely providing for effective antitumor immunity in a wide range of solid and hematological malignancies. Presents to Vbeta2-positive T-helper 1 cells specifically an immunodominant peptide derived from tumor antigen CTAG1A/NY-ESO-1(PGVLLKEFTVSGNILTIRLTAADHR) and confers protective memory response. In metastatic epithelial tumors, presents to intratumoral CD4-positive T cells a TP53 neoantigen (HYNYMCNSSCMGSMNRRPILTIITL) carrying G245S hotspot driver mutation and may mediate tumor regression. In terms of biological role, ALLELE DRB3*03:01: Presents a series of conserved peptides derived from the M.tuberculosis PPE family of proteins, in particular PPE29 and PPE33, known to be highly immunogenic. Presents immunogenic epitopes derived from C.tetani neurotoxin tetX, playing a role in immune recognition and long-term protection. Displays immunodominant viral peptides from HCV non-structural protein NS2, as part of a broad range T-helper response to resolve infection. In Homo sapiens (Human), this protein is HLA class II histocompatibility antigen, DR beta 3 chain (HLA-DRB3).